The following is a 143-amino-acid chain: Large ribosomal subunit protein uL11 (143 aa).

This sequence belongs to the universal ribosomal protein uL11 family. In terms of assembly, part of the ribosomal stalk of the 50S ribosomal subunit. Interacts with L10 and the large rRNA to form the base of the stalk. L10 forms an elongated spine to which L12 dimers bind in a sequential fashion forming a multimeric L10(L12)X complex. In terms of processing, one or more lysine residues are methylated.

In terms of biological role, forms part of the ribosomal stalk which helps the ribosome interact with GTP-bound translation factors. This Methylococcus capsulatus (strain ATCC 33009 / NCIMB 11132 / Bath) protein is Large ribosomal subunit protein uL11.